The chain runs to 427 residues: MLVKADMTKDIAQVMAEVGRKAKAAAAPLSIATSEQKNKALNAAADAILEARADILEANRLDLANAEKNGMAASFVDRLTLNEARIDAIAEGIRTIATLPDPVGEVIAEWDRPNGLHIERVRTPLGVIGVIYESRPNVTADAGALCLKAGNAVILRGGSDSAHSSAAIHKALVKGLEAANLPADAIQIVPVTDRAAVGEMLKGLGGAIDVIVPRGGKSLVARVQSEARVPVFAHLEGICHLYIDKSADLDMARRIALDAKMRRTGICGAAETLLVDRAVASTHLAPILGDLAAGGCEIRGSAEVLALYPAAKPATEEDWSTEYLDAIISVALVDGISGAIDHINRYSSHHTEAIVAEDAQTVARFFNEIDSAILLHNASTQFADGGEFGMGAEIGIATGKMHARGPVGVEQLTSFKYRVRGSGQVRG.

It belongs to the gamma-glutamyl phosphate reductase family.

Its subcellular location is the cytoplasm. The enzyme catalyses L-glutamate 5-semialdehyde + phosphate + NADP(+) = L-glutamyl 5-phosphate + NADPH + H(+). Its pathway is amino-acid biosynthesis; L-proline biosynthesis; L-glutamate 5-semialdehyde from L-glutamate: step 2/2. Functionally, catalyzes the NADPH-dependent reduction of L-glutamate 5-phosphate into L-glutamate 5-semialdehyde and phosphate. The product spontaneously undergoes cyclization to form 1-pyrroline-5-carboxylate. The polypeptide is Gamma-glutamyl phosphate reductase (Brucella ovis (strain ATCC 25840 / 63/290 / NCTC 10512)).